Here is a 688-residue protein sequence, read N- to C-terminus: Protein sel-1 homolog 2 (688 aa).

An N-terminal signal peptide occupies residues 1–18 (MNPLALLVEILIIIEVTT). The Extracellular segment spans residues 19-662 (KNSEAERYNR…KWKWLKLDST (644 aa)). N-linked (GlcNAc...) asparagine glycosylation occurs at Asn-34. 11 Sel1-like repeats span residues 107 to 142 (GDEL…DMGN), 143 to 178 (LKAM…KEGS), 179 to 214 (YKAQ…AGGS), 215 to 250 (MMSQ…DYIA), 297 to 333 (VQIQ…KAGS), 334 to 370 (ANAM…SKGN), 371 to 406 (AIGL…EKGW), 407 to 442 (PNAQ…QSGQ), 443 to 478 (PLAI…ELGH), 551 to 586 (AFAR…DKHH), and 588 to 623 (AQAM…QTSP). N-linked (GlcNAc...) asparagine glycosylation is present at Asn-162. The chain crosses the membrane as a helical span at residues 663–683 (IGPYWDLLVIGLIVVVLIFLL). The Cytoplasmic portion of the chain corresponds to 684-688 (RNHHR).

Belongs to the sel-1 family.

It localises to the membrane. Its subcellular location is the cell projection. The protein resides in the cilium. It is found in the nucleus speckle. This chain is Protein sel-1 homolog 2 (Sel1l2), found in Rattus norvegicus (Rat).